A 439-amino-acid chain; its full sequence is Beta-1,3-galactosyl-O-glycosyl-glycoprotein beta-1,6-N-acetylglucosaminyltransferase (439 aa).

The Cytoplasmic portion of the chain corresponds to 1–11 (MVGWKKKKLCR). A helical; Signal-anchor for type II membrane protein transmembrane segment spans residues 12–29 (GHHLWVLGCYMLLAVVSL). At 30–439 (RLSLRFKCDV…RHKAIYGTEL (410 aa)) the chain is on the lumenal side. 2 N-linked (GlcNAc...) asparagine; by host glycosylation sites follow: Asn71 and Asn107. 4 cysteine pairs are disulfide-bonded: Cys72–Cys229, Cys163–Cys383, Cys184–Cys211, and Cys392–Cys424.

This sequence belongs to the glycosyltransferase 14 family.

It localises to the host Golgi apparatus membrane. It catalyses the reaction a 3-O-[beta-D-galactosyl-(1-&gt;3)-N-acetyl-alpha-D-galactosaminyl]-L-seryl-[protein] + UDP-N-acetyl-alpha-D-glucosamine = 3-O-{beta-D-galactosyl-(1-&gt;3)-[N-acetyl-beta-D-glucosaminyl-(1-&gt;6)]-N-acetyl-alpha-D-galactosaminyl}-L-seryl-[protein] + UDP + H(+). The enzyme catalyses a 3-O-[beta-D-galactosyl-(1-&gt;3)-N-acetyl-alpha-D-galactosaminyl]-L-threonyl-[protein] + UDP-N-acetyl-alpha-D-glucosamine = a 3-O-{beta-D-galactosyl-(1-&gt;3)-[N-acetyl-beta-D-glucosaminyl-(1-&gt;6)]-N-acetyl-alpha-D-galactosaminyl}-L-threonyl-[protein] + UDP + H(+). It carries out the reaction a beta-D-Gal-(1-&gt;4)-beta-D-GlcNAc-(1-&gt;3)-beta-D-Gal-(1-&gt;4)-beta-D-GlcNAc derivative + UDP-N-acetyl-alpha-D-glucosamine = a beta-D-Gal-(1-&gt;4)-beta-D-GlcNAc-(1-&gt;3)-[beta-D-GlcNAc-(1-&gt;6)]-beta-D-Gal-(1-&gt;4)-N-acetyl-beta-D-glucosaminyl derivative + UDP + H(+). The catalysed reaction is 3-O-[N-acetyl-beta-D-glucosaminyl-(1-&gt;3)-N-acetyl-alpha-D-galactosaminyl]-L-seryl-[protein] + UDP-N-acetyl-alpha-D-glucosamine = 3-O-[N-acetyl-beta-D-glucosaminyl-(1-&gt;3)-[N-acetyl-beta-D-glucosaminyl-(1-&gt;6)]-N-acetyl-alpha-D-galactosaminyl]-L-seryl-[protein] + UDP + H(+). It catalyses the reaction a 3-O-[N-acetyl-beta-D-glucosaminyl-(1-&gt;3)-N-acetyl-alpha-D-galactosaminyl]-L-threonyl-[protein] + UDP-N-acetyl-alpha-D-glucosamine = 3-O-[N-acetyl-beta-D-glucosaminyl-(1-&gt;3)-[N-acetyl-beta-D-glucosaminyl-(1-&gt;6)]-N-acetyl-alpha-D-galactosaminyl]-L-threonyl-[protein] + UDP + H(+). It functions in the pathway protein modification; protein glycosylation. Non-essential glycosyltransferase that can synthesize all known mucin beta 6 N-acetylglucosaminides. Mediates core 2 and core 4 O-glycan branching, 2 important steps in mucin-type biosynthesis. Has also I-branching enzyme activity by converting linear into branched poly-N-acetyllactosaminoglycans. Contributes to the post-translational modifications of structural proteins. The protein is Beta-1,3-galactosyl-O-glycosyl-glycoprotein beta-1,6-N-acetylglucosaminyltransferase (Bo17) of Bovine herpesvirus 4 (BoHV-4).